We begin with the raw amino-acid sequence, 489 residues long: MNELRKLSITQMHDGLKKKSFSAVELVEAHISAVENEKLNAFITKTPEIAMKAAKAADEHFSRQKDDLISPLMGVPVGIKDLFCTKGIKTTACSKMLENFVPTYESTVSDLLLKSGAAMLGKLNMDEFAMGSANTNSYFGPVENVWIRKSDGEKVVPGGSSGGSAASVAGFLCAGALGSDTGGSVRQPAAYCGVVGIKPTYGRCSRFGMIAFASSLDQAGVITRSVSDSALMLEAICGYDTKDSISSEKPVPKLSSFINGDVKGKCIGIPKEYRMDGISEEIVHNWERVASYLKENGAEVVDITLPHTKYAIPVYYLICSAETSSNLARYDGVRYGLRVDADTLEEMYSLTRAEGFGKEVKRRILIGAYALSSGHYNEYYEKAQCIRALIRNDFIKAFEKIDYILVPSAPTEAFGLNEKPDPLIMCINDVFTVPASLAGLPAISVPVGLSNEGLPLALQVIGNYYDEAGILNVASVIEQNCGRIIRPLA.

Active-site charge relay system residues include K80 and S160. The Acyl-ester intermediate role is filled by S184.

It belongs to the amidase family. GatA subfamily. As to quaternary structure, heterotrimer of A, B and C subunits.

It catalyses the reaction L-glutamyl-tRNA(Gln) + L-glutamine + ATP + H2O = L-glutaminyl-tRNA(Gln) + L-glutamate + ADP + phosphate + H(+). In terms of biological role, allows the formation of correctly charged Gln-tRNA(Gln) through the transamidation of misacylated Glu-tRNA(Gln) in organisms which lack glutaminyl-tRNA synthetase. The reaction takes place in the presence of glutamine and ATP through an activated gamma-phospho-Glu-tRNA(Gln). The polypeptide is Glutamyl-tRNA(Gln) amidotransferase subunit A (Wolbachia sp. subsp. Drosophila simulans (strain wRi)).